We begin with the raw amino-acid sequence, 195 residues long: HTH-type transcriptional regulator BetI (195 aa).

The HTH tetR-type domain occupies 8–68 (PIRRQQLIEA…ATMRYLISHL (61 aa)). A DNA-binding region (H-T-H motif) is located at residues 31–50 (SIVQIARRAGVSNGIISHYF).

The protein operates within amine and polyamine biosynthesis; betaine biosynthesis via choline pathway [regulation]. Its function is as follows. Repressor involved in the biosynthesis of the osmoprotectant glycine betaine. It represses transcription of the choline transporter BetT and the genes of BetAB involved in the synthesis of glycine betaine. The polypeptide is HTH-type transcriptional regulator BetI (Pectobacterium carotovorum subsp. carotovorum (strain PC1)).